Here is a 289-residue protein sequence, read N- to C-terminus: Ribosomal protein L11 methyltransferase (289 aa).

4 residues coordinate S-adenosyl-L-methionine: T135, G156, D179, and N225.

This sequence belongs to the methyltransferase superfamily. PrmA family.

The protein resides in the cytoplasm. The catalysed reaction is L-lysyl-[protein] + 3 S-adenosyl-L-methionine = N(6),N(6),N(6)-trimethyl-L-lysyl-[protein] + 3 S-adenosyl-L-homocysteine + 3 H(+). Methylates ribosomal protein L11. The polypeptide is Ribosomal protein L11 methyltransferase (Chlorobaculum tepidum (strain ATCC 49652 / DSM 12025 / NBRC 103806 / TLS) (Chlorobium tepidum)).